A 228-amino-acid polypeptide reads, in one-letter code: E3 ubiquitin-protein ligase RNF114 (228 aa).

An RING-type zinc finger spans residues 29 to 68; sequence CPVCLEVYEKPVQVPCGHVFCSACLQECLKPKKPVCGVCR. Zn(2+) is bound by residues C91 and C94. Residues 91–110 form a C2HC RNF-type zinc finger; the sequence is CHGCRKNFFLSKIRSHVATC. N6-acetyllysine is present on K102. H106 and C110 together coordinate Zn(2+). K112 bears the N6-acetyllysine mark.

Interacts with XAF1, the interaction increases XAF1 stability and proapoptotic effects, and may regulate IFN signaling. Post-translationally, autoubiquitinated. Polyubiquitinated in the presence of E2 enzymes UBE2D1, UBE2D2 and UBE2D3, but only monoubiquitinated in the presence of UBE2E1. Expressed in numerous tissues, including skin, CD4 lymphocytes and dendritic cells. Highest levels in testis.

It is found in the cytoplasm. The protein localises to the nucleus. The enzyme catalyses S-ubiquitinyl-[E2 ubiquitin-conjugating enzyme]-L-cysteine + [acceptor protein]-L-lysine = [E2 ubiquitin-conjugating enzyme]-L-cysteine + N(6)-ubiquitinyl-[acceptor protein]-L-lysine.. The protein operates within protein modification; protein ubiquitination. E3 ubiquitin-protein ligase that promotes the ubiquitination of various substrates. In turn, participates in the regulation of many biological processes including cell cycle, apoptosis, osteoclastogenesis as well as innate or adaptive immunity. Acts as a negative regulator of NF-kappa-B-dependent transcription by promoting the ubiquitination and stabilization of the NF-kappa-B inhibitor TNFAIP3. May promote the ubiquitination of TRAF6 as well. Also acts as a negative regulator of T-cell activation. Inhibits cellular dsRNA responses and interferon production by targeting MAVS component for proteasomal degradation. Ubiquitinates the CDK inhibitor CDKN1A leading to its degradationand probably also CDKN1B and CDKN1C. This activity stimulates cell cycle G1-to-S phase transition and suppresses cellular senescence. May play a role in spermatogenesis. The polypeptide is E3 ubiquitin-protein ligase RNF114 (RNF114) (Homo sapiens (Human)).